Reading from the N-terminus, the 74-residue chain is UPF0346 protein SE_1114 (74 aa).

This sequence belongs to the UPF0346 family.

The sequence is that of UPF0346 protein SE_1114 from Staphylococcus epidermidis (strain ATCC 12228 / FDA PCI 1200).